An 82-amino-acid chain; its full sequence is Small ribosomal subunit protein bS16 (82 aa).

The protein belongs to the bacterial ribosomal protein bS16 family.

This chain is Small ribosomal subunit protein bS16, found in Histophilus somni (strain 2336) (Haemophilus somnus).